The chain runs to 164 residues: Transcription factor E (164 aa).

The HTH TFE/IIEalpha-type domain occupies 5–87 (NDKVIRGYLR…LWHLDFSDIE (83 aa)).

This sequence belongs to the TFE family. Monomer. Interaction with RNA polymerase subunits RpoF and RpoE is necessary for Tfe stimulatory transcription activity. Able to interact with Tbp and RNA polymerase in the absence of DNA promoter. Interacts both with the preinitiation and elongation complexes.

In terms of biological role, transcription factor that plays a role in the activation of archaeal genes transcribed by RNA polymerase. Facilitates transcription initiation by enhancing TATA-box recognition by TATA-box-binding protein (Tbp), and transcription factor B (Tfb) and RNA polymerase recruitment. Not absolutely required for transcription in vitro, but particularly important in cases where Tbp or Tfb function is not optimal. It dynamically alters the nucleic acid-binding properties of RNA polymerases by stabilizing the initiation complex and destabilizing elongation complexes. Seems to translocate with the RNA polymerase following initiation and acts by binding to the non template strand of the transcription bubble in elongation complexes. The protein is Transcription factor E of Methanosarcina mazei (strain ATCC BAA-159 / DSM 3647 / Goe1 / Go1 / JCM 11833 / OCM 88) (Methanosarcina frisia).